The chain runs to 53 residues: VILLLLTASAPSVDARPKTEDVPLSSFRDNTKSTLQRLLKRVNCCGIDESCCS.

Residues Val-1–Ala-15 form the signal peptide. The propeptide occupies Arg-16 to Arg-41.

Belongs to the conotoxin T superfamily. Contains 2 disulfide bonds that can be either 'C1-C3, C2-C4' or 'C1-C4, C2-C3', since these disulfide connectivities have been observed for conotoxins with cysteine framework V (for examples, see AC P0DQQ7 and AC P81755). Expressed by the venom duct.

It is found in the secreted. The sequence is that of Conotoxin Vc5.3 from Conus victoriae (Queen Victoria cone).